The chain runs to 383 residues: Pantothenate kinase 1 (383 aa).

Belongs to the type II pantothenate kinase family. Highly expressed in leaves and developing seeds. Expressed in roots, stems and flowers.

It carries out the reaction (R)-pantothenate + ATP = (R)-4'-phosphopantothenate + ADP + H(+). It functions in the pathway cofactor biosynthesis; coenzyme A biosynthesis; CoA from (R)-pantothenate: step 1/5. Regulated by feedback inhibition by malonyl-CoA. Functionally, catalyzes the phosphorylation of pantothenate the first step in CoA biosynthesis. May play a role in the physiological regulation of the intracellular CoA concentration. Functionally redudant with PANK2. This chain is Pantothenate kinase 1 (PANK1), found in Arabidopsis thaliana (Mouse-ear cress).